Here is a 150-residue protein sequence, read N- to C-terminus: Flagellar assembly factor FliW (150 aa).

Belongs to the FliW family. As to quaternary structure, interacts with translational regulator CsrA and flagellin(s).

It localises to the cytoplasm. Functionally, acts as an anti-CsrA protein, binds CsrA and prevents it from repressing translation of its target genes, one of which is flagellin. Binds to flagellin and participates in the assembly of the flagellum. The polypeptide is Flagellar assembly factor FliW (Thermoanaerobacter pseudethanolicus (strain ATCC 33223 / 39E) (Clostridium thermohydrosulfuricum)).